We begin with the raw amino-acid sequence, 424 residues long: Lipoamide acyltransferase component of branched-chain alpha-keto acid dehydrogenase complex (424 aa).

The 76-residue stretch at 3–78 folds into the Lipoyl-binding domain; that stretch reads IEQMTMPQLG…QVGEMICKIE (76 aa). N6-lipoyllysine is present on lysine 44. Residues 82–115 form a disordered region; sequence ANPAEQKQEQPAASEAAENPVAKSAGAADQPNKK. In terms of domain architecture, Peripheral subunit-binding (PSBD) spans 116-153; that stretch reads RYSPAVLRLAGEHGIDLDQVTGTGAGGRITRKDIQRLI. The interval 154 to 193 is disordered; the sequence is ETGGVQEQNPEELKTAAPAPKSASKPEPKEETSYPASAAG. Catalysis depends on residues histidine 395 and aspartate 399.

The protein belongs to the 2-oxoacid dehydrogenase family. Forms a 24-polypeptide structural core with octahedral symmetry. Requires (R)-lipoate as cofactor.

The catalysed reaction is N(6)-[(R)-dihydrolipoyl]-L-lysyl-[protein] + 2-methylpropanoyl-CoA = N(6)-[(R)-S(8)-2-methylpropanoyldihydrolipoyl]-L-lysyl-[protein] + CoA. Functionally, the branched-chain alpha-keto dehydrogenase complex catalyzes the overall conversion of alpha-keto acids to acyl-CoA and CO(2). It contains multiple copies of three enzymatic components: branched-chain alpha-keto acid decarboxylase (E1), lipoamide acyltransferase (E2) and lipoamide dehydrogenase (E3). This is Lipoamide acyltransferase component of branched-chain alpha-keto acid dehydrogenase complex (bfmBB) from Bacillus subtilis (strain 168).